The following is a 389-amino-acid chain: Large envelope protein (389 aa).

Met1 is subject to N-acetylmethionine. Gly2 is lipidated: N-myristoyl glycine; by host. The tract at residues 2–108 (GTNLSVPNPL…PPLRDTHPQA (107 aa)) is pre-S1. Positions 2–163 (GTNLSVPNPL…LSKTGDPVPN (162 aa)) are pre-S. Residues 2-170 (GTNLSVPNPL…VPNMENIASG (169 aa)) are Virion surface; in external conformation-facing. Topologically, residues 2 to 242 (GTNLSVPNPL…PGYRWMCLRR (241 aa)) are intravirion; in internal conformation. The tract at residues 74–103 (LTTVPAAPPPASTNRQSGRQPTPLSPPLRD) is disordered. Residues 85–95 (STNRQSGRQPT) are compositionally biased toward polar residues. A pre-S2 region spans residues 109–163 (MQWNSTTFHQTLQDPGVRALYFPAGGSSSGTVSPAQNTVSAISSILSKTGDPVPN). Residues 171 to 191 (LLGPLLVLQAGFFLLTKILTI) traverse the membrane as a helical segment. At 192 to 242 (PQSLDSWWTSLNFLGGTPVCLGQNSQSQISSHSPTCCPPICPGYRWMCLRR) the chain is on the intravirion; in external conformation side. A helical membrane pass occupies residues 243-263 (FIIFLCILLLCLIFLLVLLDY). Topologically, residues 264–337 (QGMLPVCPLI…WASVRFSWLS (74 aa)) are virion surface. Asn309 is a glycosylation site (N-linked (GlcNAc...) asparagine; by host). A helical membrane pass occupies residues 338 to 358 (LLVPFVQWFVGLSPTVWLSVI). Residues 359–364 (WMIWFW) lie on the Intravirion side of the membrane. Residues 365 to 387 (GPSLYNILSPFMPLLPIFFCLWV) traverse the membrane as a helical segment. Topologically, residues 388-389 (YI) are virion surface.

Belongs to the orthohepadnavirus major surface antigen family. Interacts (via its myristoylated pre-S1 region) with the host SLC10A1/NTCP; this interaction is essential for viral entry. As to quaternary structure, in its internal form (Li-HBsAg), interacts with the capsid protein and with the isoform S. Interacts with host chaperone CANX. In terms of assembly, associates with host chaperone CANX through its pre-S2 N glycan; this association may be essential for isoform M proper secretion. Interacts with isoform L. Interacts with the antigens of satellite virus HDV (HDVAgs); this interaction is required for encapsidation of HDV genomic RNA. Post-translationally, isoform M is N-terminally acetylated by host at a ratio of 90%, and N-glycosylated by host at the pre-S2 region. In terms of processing, myristoylated; this modification is essential for its interaction with the host protein SLC10A1/NTCP.

It localises to the virion membrane. In terms of biological role, the large envelope protein exists in two topological conformations, one which is termed 'external' or Le-HBsAg and the other 'internal' or Li-HBsAg. In its external conformation the protein attaches the virus to cell receptors and thereby initiating infection. This interaction determines the species specificity and liver tropism. This attachment induces virion internalization predominantly through caveolin-mediated endocytosis. The large envelope protein also assures fusion between virion membrane and endosomal membrane. In its internal conformation the protein plays a role in virion morphogenesis and mediates the contact with the nucleocapsid like a matrix protein. The middle envelope protein plays an important role in the budding of the virion. It is involved in the induction of budding in a nucleocapsid independent way. In this process the majority of envelope proteins bud to form subviral lipoprotein particles of 22 nm of diameter that do not contain a nucleocapsid. The chain is Large envelope protein from Hepatitis B virus genotype B/C subtype adw (isolate Okinawa/pODW282/1998) (HBV-B).